We begin with the raw amino-acid sequence, 79 residues long: UPF0654 protein C11D3.01c (79 aa).

A disordered region spans residues methionine 1–glutamate 79. Positions glutamate 22–lysine 45 are enriched in basic and acidic residues.

It belongs to the UPF0654 (con-6) family.

This Schizosaccharomyces pombe (strain 972 / ATCC 24843) (Fission yeast) protein is UPF0654 protein C11D3.01c.